The chain runs to 61 residues: Alpha-conotoxine-like Am1.3 (61 aa).

Positions 1–21 are cleaved as a signal peptide; the sequence is MGMRMMFTVFLLVVLATTVVS. Residues 22 to 44 constitute a propeptide that is removed on maturation; the sequence is FMSGRASHGRNAAASDLIALTIK. C60 is modified (cysteine amide).

Belongs to the conotoxin A superfamily. Post-translationally, is not hydroxylated. Contains 2 disulfide bonds. In terms of tissue distribution, expressed by the venom duct.

It localises to the secreted. Functionally, alpha-conotoxins act on postsynaptic membranes, they bind to the nicotinic acetylcholine receptors (nAChR) and thus inhibit them. The protein is Alpha-conotoxine-like Am1.3 of Conus amadis (Amadis cone).